Reading from the N-terminus, the 584-residue chain is Arginine--tRNA ligase (584 aa).

Positions 127 to 137 (PNLAKEMHVGH) match the 'HIGH' region motif.

The protein belongs to the class-I aminoacyl-tRNA synthetase family. In terms of assembly, monomer.

Its subcellular location is the cytoplasm. The enzyme catalyses tRNA(Arg) + L-arginine + ATP = L-arginyl-tRNA(Arg) + AMP + diphosphate. This is Arginine--tRNA ligase from Alcanivorax borkumensis (strain ATCC 700651 / DSM 11573 / NCIMB 13689 / SK2).